Here is a 359-residue protein sequence, read N- to C-terminus: 3-dehydroquinate synthase (359 aa).

Residues 71-76 (DAEAAK), 105-109 (GAVTD), 129-130 (TT), Lys-142, and Lys-151 contribute to the NAD(+) site. Glu-184, His-247, and His-263 together coordinate Zn(2+).

This sequence belongs to the sugar phosphate cyclases superfamily. Dehydroquinate synthase family. Requires NAD(+) as cofactor. It depends on Co(2+) as a cofactor. Zn(2+) is required as a cofactor.

The protein resides in the cytoplasm. It carries out the reaction 7-phospho-2-dehydro-3-deoxy-D-arabino-heptonate = 3-dehydroquinate + phosphate. The protein operates within metabolic intermediate biosynthesis; chorismate biosynthesis; chorismate from D-erythrose 4-phosphate and phosphoenolpyruvate: step 2/7. Catalyzes the conversion of 3-deoxy-D-arabino-heptulosonate 7-phosphate (DAHP) to dehydroquinate (DHQ). This chain is 3-dehydroquinate synthase, found in Leifsonia xyli subsp. xyli (strain CTCB07).